The sequence spans 761 residues: Complement factor B (761 aa).

The signal sequence occupies residues 1-22 (MESPQLCLVLLVLGFSSGGVSA). 3 Sushi domains span residues 32-97 (VSCS…ECRA), 98-157 (IRCP…ICDD), and 160-217 (GYCP…SCQD). Intrachain disulfides connect C34-C73, C59-C95, C100-C142, C128-C155, C162-C202, and C188-C215. N-linked (GlcNAc...) asparagine glycosylation is found at N119 and N139. Residues 267-466 (NIYLVLDGSD…DLENVFYQMI (200 aa)) form the VWFA domain. S275 and S277 together coordinate Mg(2+). A glycan (N-linked (GlcNAc...) asparagine) is linked at N282. Residue T350 coordinates Mg(2+). N-linked (GlcNAc...) asparagine glycosylation occurs at N375. In terms of domain architecture, Peptidase S1 spans 474–754 (LCGMVWEHKK…VLPWLKDKLK (281 aa)). Cystine bridges form between C475–C593, C508–C524, C596–C612, C653–C679, and C692–C722. Active-site charge relay system residues include H523 and D573. S696 functions as the Charge relay system in the catalytic mechanism.

The protein belongs to the peptidase S1 family. Monomer. Interacts with complement C3b; this interaction is dependent on the presence of Mg(2+). As to quaternary structure, catalytic component of the C3 convertase of the alternative complement pathway, also named C3bBb, composed of complement factor B Bb and complement C3b. Catalytic component of the C5 convertase of the alternative complement pathway, also named C3bBb3b, composed of complement factor B Bb and additional molecules of complement C3b. Interacts to CFP; this interaction contributes to the stabilization of the active C3-convertase enzyme complex. Requires Mg(2+) as cofactor. It depends on Mn(2+) as a cofactor. Cleaved by CFD following activation of the alternative complement system, generating Ba and Bb chains. Cleavage and activation takes place when CFB is already associated with complement C3b.

The protein localises to the secreted. The protein resides in the cell surface. It catalyses the reaction Cleavage of Arg-|-Ser bond in complement component C3 alpha-chain to yield C3a and C3b, and Arg-|-Xaa bond in complement component C5 alpha-chain to yield C5a and C5b.. Precursor of the catalytic component of the C3 and C5 convertase complexes of the alternative pathway of the complement system, a cascade of proteins that leads to phagocytosis and breakdown of pathogens and signaling that strengthens the adaptive immune system. The alternative complement pathway acts as an amplification loop that enhances other complement pathways (classical, lectin and GZMK) by promoting formation of additional C3 and C5 convertases. CFB is cleaved and activated by CFD to generate Ba and Bb chains; Bb chain constituting the catalytic component of the C3 and C5 convertases. Its function is as follows. Serine protease component of the complement C3 and C5 convertase complexes of the alternative complement pathway. Following cleavage and activation by factor D (CFD), forms the C3 convertase together with complement C3b. As part of the C3 convertase, cleaves and activates C3 into C3a anaphylatoxin and C3b opsonin, the next components of the complement pathways. When an additional complement C3b molecule binds to the C3 convertase, forms the C5 convertase, which cleaves and activates C5 into C5a anaphylatoxin and C5b component of the membrane attack complex. Functionally, involved in proliferation and differentiation of preactivated B-lymphocytes, rapid spreading of peripheral blood monocytes, stimulation of lymphocyte blastogenesis and lysis of erythrocytes. In Mus musculus (Mouse), this protein is Complement factor B (Cfb).